A 189-amino-acid polypeptide reads, in one-letter code: GMP synthase [glutamine-hydrolyzing] subunit A (189 aa).

The Glutamine amidotransferase type-1 domain maps to 5–189; that stretch reads KIIVINNYGQ…MNFFKVCEDY (185 aa). Cys79 functions as the Nucleophile in the catalytic mechanism. Catalysis depends on residues His166 and Glu168.

Heterodimer composed of a glutamine amidotransferase subunit (A) and a GMP-binding subunit (B).

The catalysed reaction is XMP + L-glutamine + ATP + H2O = GMP + L-glutamate + AMP + diphosphate + 2 H(+). It participates in purine metabolism; GMP biosynthesis; GMP from XMP (L-Gln route): step 1/1. In terms of biological role, catalyzes the synthesis of GMP from XMP. In Methanococcoides burtonii (strain DSM 6242 / NBRC 107633 / OCM 468 / ACE-M), this protein is GMP synthase [glutamine-hydrolyzing] subunit A.